Consider the following 389-residue polypeptide: tRNA pseudouridine synthase Pus10 (389 aa).

Catalysis depends on Asp213, which acts as the Nucleophile. Residues Tyr278 and Tyr350 each coordinate substrate.

It belongs to the pseudouridine synthase Pus10 family.

The enzyme catalyses uridine(54) in tRNA = pseudouridine(54) in tRNA. The catalysed reaction is uridine(55) in tRNA = pseudouridine(55) in tRNA. Functionally, responsible for synthesis of pseudouridine from uracil-54 and uracil-55 in the psi GC loop of transfer RNAs. This chain is tRNA pseudouridine synthase Pus10, found in Thermoplasma acidophilum (strain ATCC 25905 / DSM 1728 / JCM 9062 / NBRC 15155 / AMRC-C165).